The following is a 250-amino-acid chain: MSLTLKQADQASLSMQSLPKHVAIIMDGNRRWYRQHQAQCSIKSSSGHYYGAKVLPNIIESAFSLGIEVLTLFAFSTENFLRSAEEVAELFSLFHAQLDEQLPYLIENKIRLRCIGNLLALPPDLQQQIAKVASETQRHGMRELVLAINYGGKDELVRAFKKLHHDLVNKKISLDSVSEELIRLYLDTSEIPDPDLLIRTGGEMRVSNFLLWQIAYTELYVTDVLWPDFKPYHLLDAIKAYQHRSRRGGK.

D27 is a catalytic residue. D27 provides a ligand contact to Mg(2+). Substrate is bound by residues 28 to 31 (GNRR), W32, H48, and 76 to 78 (STE). N79 (proton acceptor) is an active-site residue. Substrate contacts are provided by residues F80, R82, R199, and 205 to 207 (RVS). E218 is a Mg(2+) binding site.

It belongs to the UPP synthase family. As to quaternary structure, homodimer. The cofactor is Mg(2+).

Catalyzes the condensation of isopentenyl diphosphate (IPP) with allylic pyrophosphates generating different type of terpenoids. This Chlamydia abortus (strain DSM 27085 / S26/3) (Chlamydophila abortus) protein is Isoprenyl transferase.